The chain runs to 69 residues: Large ribosomal subunit protein uL29 (69 aa).

It belongs to the universal ribosomal protein uL29 family.

This chain is Large ribosomal subunit protein uL29, found in Synechococcus sp. (strain CC9902).